The sequence spans 560 residues: Dihydroxy-acid dehydratase (560 aa).

A [2Fe-2S] cluster-binding site is contributed by cysteine 50. Aspartate 82 contacts Mg(2+). [2Fe-2S] cluster is bound at residue cysteine 123. Aspartate 124 and lysine 125 together coordinate Mg(2+). Residue lysine 125 is modified to N6-carboxylysine. A [2Fe-2S] cluster-binding site is contributed by cysteine 195. Residue glutamate 446 participates in Mg(2+) binding. Serine 472 acts as the Proton acceptor in catalysis.

This sequence belongs to the IlvD/Edd family. Homodimer. It depends on [2Fe-2S] cluster as a cofactor. Mg(2+) is required as a cofactor.

It carries out the reaction (2R)-2,3-dihydroxy-3-methylbutanoate = 3-methyl-2-oxobutanoate + H2O. It catalyses the reaction (2R,3R)-2,3-dihydroxy-3-methylpentanoate = (S)-3-methyl-2-oxopentanoate + H2O. It participates in amino-acid biosynthesis; L-isoleucine biosynthesis; L-isoleucine from 2-oxobutanoate: step 3/4. Its pathway is amino-acid biosynthesis; L-valine biosynthesis; L-valine from pyruvate: step 3/4. Functionally, functions in the biosynthesis of branched-chain amino acids. Catalyzes the dehydration of (2R,3R)-2,3-dihydroxy-3-methylpentanoate (2,3-dihydroxy-3-methylvalerate) into 2-oxo-3-methylpentanoate (2-oxo-3-methylvalerate) and of (2R)-2,3-dihydroxy-3-methylbutanoate (2,3-dihydroxyisovalerate) into 2-oxo-3-methylbutanoate (2-oxoisovalerate), the penultimate precursor to L-isoleucine and L-valine, respectively. The sequence is that of Dihydroxy-acid dehydratase from Leptothrix cholodnii (strain ATCC 51168 / LMG 8142 / SP-6) (Leptothrix discophora (strain SP-6)).